A 501-amino-acid chain; its full sequence is Nuclear receptor-binding protein 2 (501 aa).

Positions 1-33 are disordered; the sequence is MAAPEPAPRRAREREREREDESEDESDILEESP. The segment covering 7–19 has biased composition (basic and acidic residues); sequence APRRARERERERE. The segment covering 20–30 has biased composition (acidic residues); sequence DESEDESDILE. One can recognise a Protein kinase domain in the interval 38–306; the sequence is QKRREQVNQG…AHSLLFHRVL (269 aa). Phosphothreonine occurs at positions 409 and 411.

The protein belongs to the protein kinase superfamily. Ser/Thr protein kinase family.

It localises to the cytoplasm. Its function is as follows. May regulate apoptosis of neural progenitor cells during their differentiation. The chain is Nuclear receptor-binding protein 2 from Homo sapiens (Human).